The chain runs to 777 residues: Acyl-CoA dehydrogenase family member 11 (777 aa).

FAD contacts are provided by residues 501 to 511 (FCMTEPDVASS), 509 to 511 (ASS), 535 to 537 (WSS), and Ser-537. Position 511 (Ser-511) interacts with substrate. 626–629 (GPGR) serves as a coordination point for substrate. FAD contacts are provided by residues Arg-654, Gln-724, and 724–728 (QVCGG). Substrate is bound at residue Gly-752. FAD contacts are provided by residues 753 to 755 (PDE) and Glu-755.

Belongs to the acyl-CoA dehydrogenase family. Homodimer. It depends on FAD as a cofactor.

It localises to the peroxisome. It is found in the mitochondrion membrane. The enzyme catalyses a 2,3-saturated acyl-CoA + oxidized [electron-transfer flavoprotein] + H(+) = a (2E)-enoyl-CoA + reduced [electron-transfer flavoprotein]. The catalysed reaction is docosanoyl-CoA + oxidized [electron-transfer flavoprotein] + H(+) = (2E)-docosenoyl-CoA + reduced [electron-transfer flavoprotein]. It carries out the reaction tetracosanoyl-CoA + oxidized [electron-transfer flavoprotein] + H(+) = (2E)-tetracosenoyl-CoA + reduced [electron-transfer flavoprotein]. It catalyses the reaction eicosanoyl-CoA + oxidized [electron-transfer flavoprotein] + H(+) = (2E)-eicosenoyl-CoA + reduced [electron-transfer flavoprotein]. The enzyme catalyses hexacosanoyl-CoA + oxidized [electron-transfer flavoprotein] + H(+) = (2E)-hexacosenoyl-CoA + reduced [electron-transfer flavoprotein]. The catalysed reaction is tricosanoyl-CoA + oxidized [electron-transfer flavoprotein] + H(+) = (2E)-tricosenoyl-CoA + reduced [electron-transfer flavoprotein]. It participates in lipid metabolism; fatty acid beta-oxidation. In terms of biological role, acyl-CoA dehydrogenase, that exhibits maximal activity towards saturated C22-CoA. Probably participates in beta-oxydation and energy production but could also play a role in the metabolism of specific fatty acids to control fatty acids composition of cellular lipids in brain. The polypeptide is Acyl-CoA dehydrogenase family member 11 (ACAD11) (Gallus gallus (Chicken)).